A 332-amino-acid polypeptide reads, in one-letter code: Beta-ketoacyl-[acyl-carrier-protein] synthase III (332 aa).

Active-site residues include Cys116 and His257. Residues 258-262 form an ACP-binding region; the sequence is QANQR. Residue Asn287 is part of the active site.

Belongs to the thiolase-like superfamily. FabH family. Homodimer.

Its subcellular location is the cytoplasm. The catalysed reaction is malonyl-[ACP] + acetyl-CoA + H(+) = 3-oxobutanoyl-[ACP] + CO2 + CoA. The protein operates within lipid metabolism; fatty acid biosynthesis. Its function is as follows. Catalyzes the condensation reaction of fatty acid synthesis by the addition to an acyl acceptor of two carbons from malonyl-ACP. Catalyzes the first condensation reaction which initiates fatty acid synthesis and may therefore play a role in governing the total rate of fatty acid production. Possesses both acetoacetyl-ACP synthase and acetyl transacylase activities. Its substrate specificity determines the biosynthesis of branched-chain and/or straight-chain of fatty acids. The protein is Beta-ketoacyl-[acyl-carrier-protein] synthase III of Acaryochloris marina (strain MBIC 11017).